The chain runs to 104 residues: Probable guanidinium efflux system subunit GdnD (104 aa).

A run of 4 helical transmembrane segments spans residues 3–23 (WICLIAAGILEMLGVTMMNQF), 31–51 (WIFLLIIGFAASFFLLSLAME), 58–78 (AYAVWTGIGTVGGALVGILFY), and 84–104 (GKRIFFIALILGSAVGLKLIS).

This sequence belongs to the drug/metabolite transporter (DMT) superfamily. Small multidrug resistance (SMR) (TC 2.A.7.1) family. YkkC/YkkD subfamily. In terms of assembly, the efflux pump is composed of GdnC and GdnD.

It localises to the cell membrane. Its function is as follows. Probably involved in guanidinium transport. This is Probable guanidinium efflux system subunit GdnD from Bacillus licheniformis (strain ATCC 14580 / DSM 13 / JCM 2505 / CCUG 7422 / NBRC 12200 / NCIMB 9375 / NCTC 10341 / NRRL NRS-1264 / Gibson 46).